The sequence spans 851 residues: Molybdenum cofactor sulfurase (851 aa).

K249 is modified (N6-(pyridoxal phosphate)lysine). C413 is a catalytic residue. Positions 665-844 constitute an MOSC domain; it reads QYLRKFVMPG…LMVGDIVTPS (180 aa).

The protein belongs to the class-V pyridoxal-phosphate-dependent aminotransferase family. MOCOS subfamily. It depends on pyridoxal 5'-phosphate as a cofactor.

It catalyses the reaction Mo-molybdopterin + L-cysteine + AH2 = thio-Mo-molybdopterin + L-alanine + A + H2O. It functions in the pathway cofactor biosynthesis; molybdopterin biosynthesis. Sulfurates the molybdenum cofactor. Sulfation of molybdenum is essential for xanthine dehydrogenase (XDH) and aldehyde oxidase (ADO) enzymes in which molybdenum cofactor is liganded by 1 oxygen and 1 sulfur atom in active form. The polypeptide is Molybdenum cofactor sulfurase (Neosartorya fischeri (strain ATCC 1020 / DSM 3700 / CBS 544.65 / FGSC A1164 / JCM 1740 / NRRL 181 / WB 181) (Aspergillus fischerianus)).